Here is a 354-residue protein sequence, read N- to C-terminus: MASSSSNRSFLHRNANTFLTYPHCPENPEIISQKLWDLVARWNPLYIVCAREAHRDGNMHLHALLQTDKPVRTTDARIFDIEGFHPNIQSAKSVNKVRDYILKEPLAVFERGTFIPRKSCFQGNTPPFPKKNPNKDEIMAHIISHATSKQEYLCLVRKEFPYDWATKLQYFEYSANKLFPDIQEEFISPHPPSSPDLLCNESIKDWLQPNIYQPADEGSRKQSLYIVGPTRTGKSTWARSLGLHNYWQNNVDWSSYNEDAIYNIVDDIPFKYCPCWKQLVGCQKEFVVNPKYGKKKKVQMKSKPTIILANSDEDWMKEMTPGQLEYFEANCMIYVMSPGEKWYSPPQLPPTEEV.

The 104-residue stretch at 11 to 114 (LHRNANTFLT…PLAVFERGTF (104 aa)) folds into the CRESS-DNA virus Rep endonuclease domain. Positions 18 to 21 (FLTY) match the RCR-1 motif. A divalent metal cation-binding residues include glutamate 52, histidine 60, and histidine 62. The short motif at 60–62 (HLH) is the RCR-2 element. Tyrosine 100 acts as the For DNA cleavage activity in catalysis. The RCR-3 signature appears at 100-103 (YILK). Glutamate 104 lines the a divalent metal cation pocket. An oligomerization region spans residues 174–186 (SANKLFPDIQEEF). ATP is bound at residue 228–235 (GPTRTGKS). The tract at residues 251–269 (VDWSSYNEDAIYNIVDDIP) is transactivation. A Nuclear localization signal motif is present at residues 291–302 (KYGKKKKVQMKS).

Belongs to the geminiviridae Rep protein family. In terms of assembly, homooligomer. Rep binds to repeated DNA motifs (iterons). Forms the O-complex, which is a Rep-DNA complex involved in the initiation of RCR. Part of the C- and V-complexes which are RepA-Rep-DNA complexes involved in the c-sense and v-sense transcription. Requires Mg(2+) as cofactor. Mn(2+) serves as cofactor.

The protein localises to the host nucleus. Essential for the replication of viral ssDNA. The closed circular ssDNA genome is first converted to a superhelical dsDNA. Rep binds a specific region at the genome origin of replication. It introduces an endonucleolytic nick within the conserved sequence 5'-TAATATTAC-3' in the intergenic region of the genome present in all geminiviruses, thereby initiating the rolling circle replication (RCR). Following cleavage, binds covalently to the 5'-phosphate of DNA as a tyrosyl ester. The cleavage gives rise to a free 3'-OH that serves as a primer for the cellular DNA polymerase. The polymerase synthesizes the (+) strand DNA by rolling circle mechanism. After one round of replication, a Rep-catalyzed nucleotidyl transfer reaction releases a circular single-stranded virus genome, thereby terminating the replication. Displays origin-specific DNA cleavage, nucleotidyl transferase, ATPase and helicase activities. Acts as an inhibitor of C-sense gene transcription. In Avena sativa (Oat), this protein is Replication-associated protein.